Reading from the N-terminus, the 360-residue chain is Ribosomal RNA small subunit methyltransferase C (360 aa).

It belongs to the methyltransferase superfamily. RsmC family. Monomer.

It is found in the cytoplasm. It catalyses the reaction guanosine(1207) in 16S rRNA + S-adenosyl-L-methionine = N(2)-methylguanosine(1207) in 16S rRNA + S-adenosyl-L-homocysteine + H(+). Specifically methylates the guanine in position 1207 of 16S rRNA in the 30S particle. The chain is Ribosomal RNA small subunit methyltransferase C from Alteromonas mediterranea (strain DSM 17117 / CIP 110805 / LMG 28347 / Deep ecotype).